The primary structure comprises 1281 residues: Zinc finger transcription factor Trps1 (1281 aa).

Residues 1 to 198 form a disordered region; that stretch reads MVRKKNPPLR…VPSDGGVRLN (198 aa). Lys29 participates in a covalent cross-link: Glycyl lysine isopeptide (Lys-Gly) (interchain with G-Cter in SUMO2). A compositionally biased stretch (polar residues) spans 40–49; sequence DQMSENTDQS. The span at 53 to 63 shows a compositional bias: basic and acidic residues; sequence ELNHKEEHSLH. Residue Lys76 forms a Glycyl lysine isopeptide (Lys-Gly) (interchain with G-Cter in SUMO2) linkage. Residues Ser90 and Ser127 each carry the phosphoserine modification. The segment covering 148–162 has biased composition (basic and acidic residues); that stretch reads LETKEDQKMSPKATE. Over residues 163–189 the composition is skewed to polar residues; it reads ETGQAQSGQANCQGLSPVSVASKNPQV. Phosphoserine occurs at positions 178 and 216. A C2H2-type 1; atypical zinc finger spans residues 222–247; it reads FKCNICGYGYYGNDPTDLIKHFRKYH. A Glycyl lysine isopeptide (Lys-Gly) (interchain with G-Cter in SUMO2) cross-link involves residue Lys263. The C2H2-type 2; atypical zinc-finger motif lies at 333–358; it reads FRCKFCNFTYMGNSSTELEQHFLQTH. A disordered region spans residues 365–394; that stretch reads SLPSSEVAKPSEKNSNKSIPALQSSDSGDL. Over residues 380 to 391 the composition is skewed to polar residues; that stretch reads NKSIPALQSSDS. Residues Lys418, Lys457, Lys474, and Lys488 each participate in a glycyl lysine isopeptide (Lys-Gly) (interchain with G-Cter in SUMO2) cross-link. The interval 483 to 512 is disordered; the sequence is QNDLAKSSEGETMTKTDKSSSGAKKKDFSS. Positions 488–512 are enriched in basic and acidic residues; it reads KSSEGETMTKTDKSSSGAKKKDFSS. The segment at 614–637 adopts a C2H2-type 3; atypical zinc-finger fold; it reads HQCHQCSFTTPDVDVLLFHYESVH. A mediates interaction with GLI3 region spans residues 635 to 819; the sequence is SVHESQASDV…SLGLLTPVSG (185 aa). Lys645 participates in a covalent cross-link: Glycyl lysine isopeptide (Lys-Gly) (interchain with G-Cter in SUMO2). 2 C2H2-type zinc fingers span residues 666-689 and 692-715; these read HSCTKCDFITQVEEEISRHYRRAH and YKCRQCSFTAADTQSLLEHFNTVH. A Glycyl lysine isopeptide (Lys-Gly) (interchain with G-Cter in SUMO2) cross-link involves residue Lys737. Thr751 carries the post-translational modification Phosphothreonine. Lys755 participates in a covalent cross-link: Glycyl lysine isopeptide (Lys-Gly) (interchain with G-Cter in SUMO2). A Glycyl lysine isopeptide (Lys-Gly) (interchain with G-Cter in SUMO1); alternate cross-link involves residue Lys766. Lys766 participates in a covalent cross-link: Glycyl lysine isopeptide (Lys-Gly) (interchain with G-Cter in SUMO2); alternate. Residues Lys825, Lys850, Lys877, and Lys879 each participate in a glycyl lysine isopeptide (Lys-Gly) (interchain with G-Cter in SUMO2) cross-link. Residues 856–887 are disordered; sequence APAGGEKSGALPQQYPASGENKSKDESQSLLR. A GATA-type zinc finger spans residues 896–920; the sequence is CANCLTTKTSLWRKNANGGYVCNAC. Glycyl lysine isopeptide (Lys-Gly) (interchain with G-Cter in SUMO2) cross-links involve residues Lys925, Lys937, and Lys965. Polar residues predominate over residues 961 to 977; sequence EQLNKQQRGSNEEQVNG. A disordered region spans residues 961 to 1000; that stretch reads EQLNKQQRGSNEEQVNGSPLERRSEDHLTESHQREIPLPS. Ser978 is modified (phosphoserine). The span at 980–995 shows a compositional bias: basic and acidic residues; the sequence is LERRSEDHLTESHQRE. Residues 985-1184 are mediates interaction with RNF4; it reads EDHLTESHQR…PTANGASKEK (200 aa). Residues Lys1003, Lys1012, Lys1030, and Lys1040 each participate in a glycyl lysine isopeptide (Lys-Gly) (interchain with G-Cter in SUMO2) cross-link. A disordered region spans residues 1039–1080; it reads IKSPQESTGDPGNSSSVSEGKGSSERGSPIEKYMRPAKHPNY. The span at 1040-1049 shows a compositional bias: polar residues; sequence KSPQESTGDP. Ser1041 carries the post-translational modification Phosphoserine. Over residues 1050 to 1059 the composition is skewed to low complexity; it reads GNSSSVSEGK. Residues 1060–1072 are compositionally biased toward basic and acidic residues; that stretch reads GSSERGSPIEKYM. The residue at position 1066 (Ser1066) is a Phosphoserine. Lys1070 participates in a covalent cross-link: Glycyl lysine isopeptide (Lys-Gly) (interchain with G-Cter in SUMO2). Phosphoserine is present on Ser1085. The tract at residues 1163–1281 is transcriptional repressor domain; that stretch reads PLDLAIKHSR…QVEKNGKPKE (119 aa). The segment at 1168–1196 is disordered; sequence IKHSRPGPTANGASKEKTKAPPNVKNEGP. Glycyl lysine isopeptide (Lys-Gly) (interchain with G-Cter in SUMO2); alternate cross-links involve residues Lys1192 and Lys1201. Residues Lys1192 and Lys1201 each participate in a glycyl lysine isopeptide (Lys-Gly) (interchain with G-Cter in SUMO); alternate cross-link. Lys1201 is covalently cross-linked (Glycyl lysine isopeptide (Lys-Gly) (interchain with G-Cter in SUMO1); alternate). 2 consecutive C2H2-type zinc fingers follow at residues 1215–1237 and 1243–1267; these read TKCVHCGIVFLDEVMYALHMSCH and FQCSICQHLCTDKYDFTTHIQRGLH.

In terms of assembly, interacts with RNF4; regulates TRPS1 repressor activity. Interacts specifically with the activator form of GLI3 (GLI3A) but not with the repressor form (GLI3R). Post-translationally, sumoylated. Sumoylation in the repressor domain inhibits the transcription repression activity. Sumoylation on Lys-1201 is the major site. Appears to be sumoylated on multiple sites. Ubiquitously expressed in the adult. Found in fetal brain, lung, kidney, liver, spleen and thymus. More highly expressed in androgen-dependent than in androgen-independent prostate cancer cells.

The protein resides in the nucleus. Functionally, transcriptional repressor. Binds specifically to GATA sequences and represses expression of GATA-regulated genes at selected sites and stages in vertebrate development. Regulates chondrocyte proliferation and differentiation. Executes multiple functions in proliferating chondrocytes, expanding the region of distal chondrocytes, activating proliferation in columnar cells and supporting the differentiation of columnar into hypertrophic chondrocytes. The chain is Zinc finger transcription factor Trps1 (TRPS1) from Homo sapiens (Human).